We begin with the raw amino-acid sequence, 261 residues long: Protein LIKE COV 2 (261 aa).

Positions 1-38 are disordered; that stretch reads MAEGKEATTSSLSQGLTPHQDPDDAPKSPPNSPNSSTR. The Cytoplasmic portion of the chain corresponds to 1–56; the sequence is MAEGKEATTSSLSQGLTPHQDPDDAPKSPPNSPNSSTRKACYGVLQSWVSKKFMTG. Over residues 7–17 the composition is skewed to polar residues; sequence ATTSSLSQGLT. The chain crosses the membrane as a helical span at residues 57-77; it reads FVVLFPVAVTFLITWWFIQFV. Residues 78 to 91 lie on the Extracellular side of the membrane; that stretch reads DGFFSPIYENLGVD. The chain crosses the membrane as a helical span at residues 92–112; that stretch reads IFGLGFITSVLFTFFVGIFAS. Topologically, residues 113–261 are cytoplasmic; the sequence is SWLGSTVFWL…HSLRVPLNRL (149 aa).

Belongs to the plant COV1 protein family.

The protein localises to the membrane. The polypeptide is Protein LIKE COV 2 (Arabidopsis thaliana (Mouse-ear cress)).